A 387-amino-acid polypeptide reads, in one-letter code: 1-deoxy-D-xylulose 5-phosphate reductoisomerase (387 aa).

NADPH contacts are provided by threonine 10, glycine 11, serine 12, valine 13, asparagine 38, and asparagine 119. Lysine 120 is a binding site for 1-deoxy-D-xylulose 5-phosphate. Glutamate 121 serves as a coordination point for NADPH. Aspartate 145 provides a ligand contact to Mn(2+). 1-deoxy-D-xylulose 5-phosphate-binding residues include serine 146, glutamate 147, serine 170, and histidine 193. Glutamate 147 serves as a coordination point for Mn(2+). Residue glycine 199 participates in NADPH binding. The 1-deoxy-D-xylulose 5-phosphate site is built by serine 206, asparagine 211, lysine 212, and glutamate 215. Glutamate 215 provides a ligand contact to Mn(2+).

It belongs to the DXR family. Requires Mg(2+) as cofactor. The cofactor is Mn(2+).

It catalyses the reaction 2-C-methyl-D-erythritol 4-phosphate + NADP(+) = 1-deoxy-D-xylulose 5-phosphate + NADPH + H(+). It participates in isoprenoid biosynthesis; isopentenyl diphosphate biosynthesis via DXP pathway; isopentenyl diphosphate from 1-deoxy-D-xylulose 5-phosphate: step 1/6. Catalyzes the NADPH-dependent rearrangement and reduction of 1-deoxy-D-xylulose-5-phosphate (DXP) to 2-C-methyl-D-erythritol 4-phosphate (MEP). This Wolbachia sp. subsp. Drosophila simulans (strain wRi) protein is 1-deoxy-D-xylulose 5-phosphate reductoisomerase.